Here is a 765-residue protein sequence, read N- to C-terminus: Putative chloride channel-like protein CLC-g (765 aa).

The next 12 helical transmembrane spans lie at 67–87 (VFMK…IGFA), 116–136 (FVVF…ITAF), 167–187 (LIIK…IGKA), 190–210 (MVHT…KRYR), 232–252 (GAAA…LFAL), 262–282 (ALLW…RALI), 315–335 (VLPV…YNFL), 355–375 (ILLA…LPFL), 438–458 (FSVL…YGIV), 462–482 (GLFV…GMLL), 494–514 (AVLG…STCV), and 515–535 (ILLE…VLLI). The CBS 1 domain occupies 568–640 (MRQLLVGDVV…LLKKRVFMPS (73 aa)). Serine 646 bears the Phosphoserine mark. Residues 687-748 (FSNASPYTVV…PEHILGLHPS (62 aa)) form the CBS 2 domain. Residues 715-735 (HLLVIPKTSNRPPVVGILTRH) traverse the membrane as a helical segment.

This sequence belongs to the chloride channel (TC 2.A.49) family. Homodimer. Interacts with PP2A5.

Its subcellular location is the membrane. In terms of biological role, putative voltage-gated chloride channel. This chain is Putative chloride channel-like protein CLC-g (CLC-G), found in Arabidopsis thaliana (Mouse-ear cress).